Reading from the N-terminus, the 447-residue chain is Signal recognition particle 54 kDa protein (447 aa).

GTP is bound by residues 103-110 (GVQGSGKT), 185-189 (DTAGR), and 245-248 (TKMD).

This sequence belongs to the GTP-binding SRP family. SRP54 subfamily. As to quaternary structure, part of the signal recognition particle protein translocation system, which is composed of SRP and FtsY. Archaeal SRP consists of a 7S RNA molecule of 300 nucleotides and two protein subunits: SRP54 and SRP19.

The protein localises to the cytoplasm. It carries out the reaction GTP + H2O = GDP + phosphate + H(+). Its function is as follows. Involved in targeting and insertion of nascent membrane proteins into the cytoplasmic membrane. Binds to the hydrophobic signal sequence of the ribosome-nascent chain (RNC) as it emerges from the ribosomes. The SRP-RNC complex is then targeted to the cytoplasmic membrane where it interacts with the SRP receptor FtsY. This Saccharolobus islandicus (strain L.S.2.15 / Lassen #1) (Sulfolobus islandicus) protein is Signal recognition particle 54 kDa protein.